The chain runs to 471 residues: Mixed lineage kinase domain-like protein (471 aa).

The segment at 1–149 (MENLKHIITL…DADEDRRAFQ (149 aa)) is N-terminal bundle and brace (NBB); mediates INSP6 binding. Positions 55 to 84 (SEKLTTAMNRFKAALEEANGEIEKFSNRSN) form a coiled coil. Phosphoserine is present on Ser-125. A coiled-coil region spans residues 139-180 (QDADEDRRAFQMLRRDNEKIEASLRRLEINMKEIKETLRQYL). A Protein kinase domain is found at 194–469 (KEIKKEQLSG…DEILKKLSTF (276 aa)). ATP is bound by residues 209-217 (LRENEVSTL) and Lys-230. Thr-357 carries the post-translational modification Phosphothreonine; by RIPK3. Ser-358 and Ser-360 each carry phosphoserine; by RIPK3.

The protein belongs to the protein kinase superfamily. Homooligomer. Homotrimer; forms homotrimers on necroptosis induction. Upon TNF-induced necrosis, forms in complex with PGAM5, RIPK1 and RIPK3. Within this complex, may play a role in the proper targeting of RIPK1-RIPK3 to its downstream effector PGAM5. Interacts with RIPK3; the interaction is direct and promotes its phosphorylation and subsequent activation. Phosphorylation by RIPK3 induces a conformational switch that is required for necroptosis. It also induces homotrimerization and localization to the plasma membrane.

The protein localises to the cytoplasm. It localises to the cell membrane. It is found in the nucleus. Its activity is regulated as follows. Activated via binding to highly phosphorylated inositol phosphates such as inositolhexakisphosphate (InsP6) which mediates the release of an N-terminal auto-inhibitory region. Activation requires not only RIPK3-dependent phosphorylation but also binding to highly phosphorylated inositol phosphates. Inhibited by necrosulfonamide, a specific inhibitor of necroptosis that targets Cys-86. Pseudokinase that plays a key role in TNF-induced necroptosis, a programmed cell death process. Does not have protein kinase activity. Activated following phosphorylation by RIPK3, leading to homotrimerization, localization to the plasma membrane and execution of programmed necrosis characterized by calcium influx and plasma membrane damage. In addition to TNF-induced necroptosis, necroptosis can also take place in the nucleus in response to orthomyxoviruses infection: following activation by ZBP1, MLKL is phosphorylated by RIPK3 in the nucleus, triggering disruption of the nuclear envelope and leakage of cellular DNA into the cytosol.following ZBP1 activation, which senses double-stranded Z-RNA structures, nuclear RIPK3 catalyzes phosphorylation and activation of MLKL, promoting disruption of the nuclear envelope and leakage of cellular DNA into the cytosol. Binds to highly phosphorylated inositol phosphates such as inositolhexakisphosphate (InsP6) which is essential for its necroptotic function. The sequence is that of Mixed lineage kinase domain-like protein from Homo sapiens (Human).